The primary structure comprises 485 residues: Aspartyl/glutamyl-tRNA(Asn/Gln) amidotransferase subunit B (485 aa).

The protein belongs to the GatB/GatE family. GatB subfamily. In terms of assembly, heterotrimer of A, B and C subunits.

It carries out the reaction L-glutamyl-tRNA(Gln) + L-glutamine + ATP + H2O = L-glutaminyl-tRNA(Gln) + L-glutamate + ADP + phosphate + H(+). The catalysed reaction is L-aspartyl-tRNA(Asn) + L-glutamine + ATP + H2O = L-asparaginyl-tRNA(Asn) + L-glutamate + ADP + phosphate + 2 H(+). Its function is as follows. Allows the formation of correctly charged Asn-tRNA(Asn) or Gln-tRNA(Gln) through the transamidation of misacylated Asp-tRNA(Asn) or Glu-tRNA(Gln) in organisms which lack either or both of asparaginyl-tRNA or glutaminyl-tRNA synthetases. The reaction takes place in the presence of glutamine and ATP through an activated phospho-Asp-tRNA(Asn) or phospho-Glu-tRNA(Gln). The polypeptide is Aspartyl/glutamyl-tRNA(Asn/Gln) amidotransferase subunit B (Borrelia duttonii (strain Ly)).